Reading from the N-terminus, the 106-residue chain is ATP-dependent Clp protease adapter protein ClpS (106 aa).

This sequence belongs to the ClpS family. In terms of assembly, binds to the N-terminal domain of the chaperone ClpA.

Involved in the modulation of the specificity of the ClpAP-mediated ATP-dependent protein degradation. The chain is ATP-dependent Clp protease adapter protein ClpS from Salmonella agona (strain SL483).